Consider the following 134-residue polypeptide: Ribosome-binding factor A (134 aa).

It belongs to the RbfA family. In terms of assembly, monomer. Binds 30S ribosomal subunits, but not 50S ribosomal subunits or 70S ribosomes.

The protein localises to the cytoplasm. In terms of biological role, one of several proteins that assist in the late maturation steps of the functional core of the 30S ribosomal subunit. Associates with free 30S ribosomal subunits (but not with 30S subunits that are part of 70S ribosomes or polysomes). Required for efficient processing of 16S rRNA. May interact with the 5'-terminal helix region of 16S rRNA. The protein is Ribosome-binding factor A of Bartonella bacilliformis (strain ATCC 35685 / KC583 / Herrer 020/F12,63).